The primary structure comprises 598 residues: Mitochondrial distribution and morphology protein 30 (598 aa).

In terms of domain architecture, F-box spans 13 to 59 (SFTIDHLPPEIWLCISKLVGTSDLHNLCLINRRLYLTITSDEIWKRR).

Interacts with SKP1. Component of the probable SCF(MDM30) complex containing CDC53, SKP1, RBX1 and MDM30. Interacts with SKP1 and FZO1.

The protein localises to the cytoplasm. It localises to the mitochondrion. Its pathway is protein modification; protein ubiquitination. Its function is as follows. Substrate recognition component of a SCF (SKP1-CUL1-F-box protein) E3 ubiquitin-protein ligase complex which mediates the ubiquitination and subsequent proteasomal degradation of target proteins. Probably recognizes and binds to phosphorylated target proteins. Recognizes FZO1 and regulates the amount of FZO1. Regulatory factor for the mitochondrial fusion machinery. Required for mitochondrial DNA maintenance. In Saccharomyces cerevisiae (strain ATCC 204508 / S288c) (Baker's yeast), this protein is Mitochondrial distribution and morphology protein 30 (MDM30).